Consider the following 561-residue polypeptide: Urocanate hydratase (561 aa).

NAD(+) is bound by residues 52–53 (GG), Gln130, 176–178 (GMG), Glu196, Arg201, 242–243 (NA), 263–267 (QTSAH), 273–274 (YL), and Tyr322. Cys410 is a catalytic residue. Position 492 (Gly492) interacts with NAD(+).

The protein belongs to the urocanase family. It depends on NAD(+) as a cofactor.

The protein resides in the cytoplasm. It carries out the reaction 4-imidazolone-5-propanoate = trans-urocanate + H2O. It participates in amino-acid degradation; L-histidine degradation into L-glutamate; N-formimidoyl-L-glutamate from L-histidine: step 2/3. Its function is as follows. Catalyzes the conversion of urocanate to 4-imidazolone-5-propionate. This is Urocanate hydratase from Citrobacter koseri (strain ATCC BAA-895 / CDC 4225-83 / SGSC4696).